A 328-amino-acid polypeptide reads, in one-letter code: NADH-cytochrome b5 reductase-like protein (328 aa).

Residues 76–184 enclose the FAD-binding FR-type domain; it reads DKWLEFKLQD…KGPVEKFKYS (109 aa). A Phosphothreonine modification is found at Thr-201.

This sequence belongs to the flavoprotein pyridine nucleotide cytochrome reductase family. The cofactor is FAD.

The protein localises to the mitochondrion. The catalysed reaction is 2 Fe(III)-[cytochrome b5] + NADH = 2 Fe(II)-[cytochrome b5] + NAD(+) + H(+). Its function is as follows. Desaturation and elongation of fatty acids. The chain is NADH-cytochrome b5 reductase-like protein (CBR2) from Arabidopsis thaliana (Mouse-ear cress).